The sequence spans 470 residues: Probable citrate synthase, mitochondrial (470 aa).

Active-site residues include histidine 297, histidine 351, and aspartate 406.

The protein belongs to the citrate synthase family. In terms of assembly, homodimer.

Its subcellular location is the mitochondrion matrix. The catalysed reaction is oxaloacetate + acetyl-CoA + H2O = citrate + CoA + H(+). It participates in carbohydrate metabolism; tricarboxylic acid cycle; isocitrate from oxaloacetate: step 1/2. This is Probable citrate synthase, mitochondrial from Leishmania major.